The primary structure comprises 226 residues: Peroxynitrite isomerase 2 (226 aa).

Positions 73-79 match the GXWXGXG motif; sequence GVWRGEG. Heme b is bound by residues Lys-189 and His-216.

The protein belongs to the nitrobindin family. Homodimer. Heme b is required as a cofactor.

It catalyses the reaction peroxynitrite = nitrate. It functions in the pathway nitrogen metabolism. Functionally, heme-binding protein able to scavenge peroxynitrite and to protect free L-tyrosine against peroxynitrite-mediated nitration, by acting as a peroxynitrite isomerase that converts peroxynitrite to nitrate. Therefore, this protein likely plays a role in peroxynitrite sensing and in the detoxification of reactive nitrogen and oxygen species (RNS and ROS, respectively). Is able to bind nitric oxide (NO) in vitro, but may act as a sensor of peroxynitrite levels in vivo. The protein is Peroxynitrite isomerase 2 of Mycobacterium bovis (strain ATCC BAA-935 / AF2122/97).